The primary structure comprises 405 residues: L-rhamnonate dehydratase (405 aa).

Substrate-binding residues include His-33 and Arg-59. The Mg(2+) site is built by Asp-226, Glu-252, and Glu-280. His-329 serves as the catalytic Proton acceptor. Glu-349 lines the substrate pocket.

Belongs to the mandelate racemase/muconate lactonizing enzyme family. RhamD subfamily. As to quaternary structure, homooctamer; tetramer of dimers. The cofactor is Mg(2+).

It carries out the reaction L-rhamnonate = 2-dehydro-3-deoxy-L-rhamnonate + H2O. Its function is as follows. Catalyzes the dehydration of L-rhamnonate to 2-keto-3-deoxy-L-rhamnonate (KDR). The protein is L-rhamnonate dehydratase of Shigella boydii serotype 4 (strain Sb227).